The sequence spans 128 residues: uncharacterized protein (128 aa).

The region spanning 1–126 (MHHIELYVSD…DRIKVELVAP (126 aa)) is the VOC domain.

This is an uncharacterized protein from Bacillus subtilis (strain 168).